The chain runs to 359 residues: Nicotinate-nucleotide--dimethylbenzimidazole phosphoribosyltransferase (359 aa).

Glu-318 serves as the catalytic Proton acceptor.

This sequence belongs to the CobT family. Homodimer.

It catalyses the reaction 5,6-dimethylbenzimidazole + nicotinate beta-D-ribonucleotide = alpha-ribazole 5'-phosphate + nicotinate + H(+). Its pathway is nucleoside biosynthesis; alpha-ribazole biosynthesis; alpha-ribazole from 5,6-dimethylbenzimidazole: step 1/2. In terms of biological role, catalyzes the synthesis of alpha-ribazole-5'-phosphate from nicotinate mononucleotide (NAMN) and 5,6-dimethylbenzimidazole (DMB). This is Nicotinate-nucleotide--dimethylbenzimidazole phosphoribosyltransferase from Shigella flexneri serotype 5b (strain 8401).